We begin with the raw amino-acid sequence, 248 residues long: ATP synthase subunit a, chloroplastic (248 aa).

Transmembrane regions (helical) follow at residues 38-58 (QVLLTSWVVIAVLLGSATIAV), 96-116 (VPFIGTMFLFIFVSNWSGALL), 135-155 (INTTVALALLTSVAYFYAGLT), 200-220 (LVVAVLVSLVPLIVPIPVMFL), and 221-241 (GLFTSGIQALIFATLAAAYIG).

This sequence belongs to the ATPase A chain family. In terms of assembly, F-type ATPases have 2 components, CF(1) - the catalytic core - and CF(0) - the membrane proton channel. CF(1) has five subunits: alpha(3), beta(3), gamma(1), delta(1), epsilon(1). CF(0) has four main subunits: a, b, b' and c.

It is found in the plastid. It localises to the chloroplast thylakoid membrane. Key component of the proton channel; it plays a direct role in the translocation of protons across the membrane. In Pinus thunbergii (Japanese black pine), this protein is ATP synthase subunit a, chloroplastic.